Consider the following 384-residue polypeptide: Intraflagellar transport protein 46 homolog (384 aa).

Disordered stretches follow at residues 52-151 (VNAE…PADY) and 358-384 (SATD…LTLD). Residues 87-99 (EKLEEDTKRKKEP) show a composition bias toward basic and acidic residues. The segment covering 110–138 (DEEEDEDDDDDDDDDDSDDTESDEEEEEP) has biased composition (acidic residues). The segment covering 358 to 374 (SATDGQKSDTPPASRSA) has biased composition (polar residues).

Belongs to the IFT46 family.

It localises to the cytoplasm. The protein localises to the cytoskeleton. It is found in the cilium basal body. Its subcellular location is the cell projection. The protein resides in the cilium. Its function is as follows. Forms part of a complex involved in intraflagellar transport (IFT), the bi-directional movement of particles required for the assembly, maintenance and functioning of primary cilia. Plays a role in early embryonic development. This Danio rerio (Zebrafish) protein is Intraflagellar transport protein 46 homolog.